The chain runs to 435 residues: MTSENNNTEFAELKIRDKIFKLPILKASIGQDVIDISKVYSEADCFTYDPGFMSTASCRSTITYIDGDQGILRHRGYDIKDLAEKSDFLEVAYLLIYGELPNNKQYNDFTKKVAHHALVNERLHYLFQTFCSSSHPMAIMLAAVGSLSAFYPDLLNFFKEADYELTAIRMIAKIPTIAAMSYKYSIGQPFVYPDNSLDFTENFLHMMFATPCEKYKVNPVIKNALNKIFILHADHEQNASTSTVRIAGSSGANPFACVSTGIASLWGPAHGGANEAVINMLKEIGSVENIPKYIAKAKDKNDNFRLMGFGHRVYKNYDPRAAVLKETCKEVLKELGQLDNNPLLQIAIELEAIALKDEYFIERKLYPNVDFYSGIIYKAMGIPPQMFTVLFATARTVGWMAQWKEMHEDPEQKISRPRQLYTGQVHREYKTIKER.

Catalysis depends on residues His-311 and Asp-370.

The protein belongs to the citrate synthase family.

It catalyses the reaction oxaloacetate + acetyl-CoA + H2O = citrate + CoA + H(+). The protein operates within carbohydrate metabolism; tricarboxylic acid cycle; isocitrate from oxaloacetate: step 1/2. The protein is Citrate synthase (gltA) of Rickettsia bellii (strain RML369-C).